The sequence spans 228 residues: uncharacterized protein (228 aa).

Transmembrane regions (helical) follow at residues 14–34, 42–62, 130–150, 156–176, and 192–212; these read HTIS…MLLA, VALF…AITL, FMFS…LVGS, FSFD…VLFM, and IAIA…LIAL.

This sequence belongs to the AzlC family.

The protein localises to the cell membrane. This is an uncharacterized protein from Helicobacter pylori (strain J99 / ATCC 700824) (Campylobacter pylori J99).